Consider the following 627-residue polypeptide: Serine/threonine-protein kinase Nek5 (627 aa).

In terms of domain architecture, Protein kinase spans 4–255 (FHLIKIIGEG…VTSLLKRPFL (252 aa)). ATP-binding positions include 10-18 (IGEGTFGKV) and K33. D124 serves as the catalytic Proton acceptor. Over residues 563-580 (QLEPGSDEDDIKFEESED) the composition is skewed to acidic residues. Disordered regions lie at residues 563-582 (QLEP…EDEL) and 591-627 (EKLA…KKLQ). Positions 609–619 (NAEEPGEKEKT) are enriched in basic and acidic residues.

Belongs to the protein kinase superfamily. NEK Ser/Thr protein kinase family. NIMA subfamily. Requires Mg(2+) as cofactor.

The protein localises to the cell projection. Its subcellular location is the cilium. It localises to the flagellum. It catalyses the reaction L-seryl-[protein] + ATP = O-phospho-L-seryl-[protein] + ADP + H(+). The catalysed reaction is L-threonyl-[protein] + ATP = O-phospho-L-threonyl-[protein] + ADP + H(+). This Mus musculus (Mouse) protein is Serine/threonine-protein kinase Nek5 (Nek5).